The following is a 111-amino-acid chain: Movement protein TGB2 (111 aa).

Topologically, residues 1–16 (MSSHQNFLTPPPDHSK) are cytoplasmic. Residues 17 to 37 (AILAVAVGVGLAIVLHFSLSY) traverse the membrane as a helical segment. Topologically, residues 38-72 (KLPSPGDNIHSLPFGGTYRDGTKSIIYNSPHRGPG) are lumenal. The helical transmembrane segment at 73–93 (QSGALPIITVFAIIECTLHVL) threads the bilayer. Residues 94-111 (RKRDNPVRPQHSDCPNCS) are Cytoplasmic-facing.

Belongs to the Tymovirales TGBp2 protein family.

It is found in the host endoplasmic reticulum membrane. Plays a role in viral cell-to-cell propagation, by facilitating genome transport to neighboring plant cells through plasmosdesmata,. This chain is Movement protein TGB2, found in Carica papaya (Papaya).